Here is a 56-residue protein sequence, read N- to C-terminus: MAVQQNKKSRSKRGMRRSHDALSTAQLSVDATSGELHRRHNVTADGYYRGQKVINK.

The disordered stretch occupies residues 1–37 (MAVQQNKKSRSKRGMRRSHDALSTAQLSVDATSGELH). Residues 7-16 (KKSRSKRGMR) show a composition bias toward basic residues. Residues 21 to 31 (ALSTAQLSVDA) are compositionally biased toward polar residues.

This sequence belongs to the bacterial ribosomal protein bL32 family.

In Shewanella loihica (strain ATCC BAA-1088 / PV-4), this protein is Large ribosomal subunit protein bL32.